Here is a 146-residue protein sequence, read N- to C-terminus: Hemoglobin subunit beta-1/2 (146 aa).

Position 1 is an N-acetylvaline (Val-1). A Globin domain is found at 2 to 146; sequence HLTPDEKNAV…VATALAHKYH (145 aa). Ser-44 is modified (phosphoserine). Position 59 is an N6-acetyllysine (Lys-59). Heme b contacts are provided by His-63 and His-92. Cys-93 carries the post-translational modification S-nitrosocysteine. The residue at position 144 (Lys-144) is an N6-acetyllysine.

The protein belongs to the globin family. Heterotetramer of two alpha chains and two beta chains. As to expression, red blood cells.

In terms of biological role, involved in oxygen transport from the lung to the various peripheral tissues. This is Hemoglobin subunit beta-1/2 (HBB) from Otolemur crassicaudatus (Brown greater galago).